Reading from the N-terminus, the 791-residue chain is Putative inactive tyrosine-protein kinase Wsck (791 aa).

The first 26 residues, 1 to 26, serve as a signal peptide directing secretion; the sequence is MECGSHSGHRPIPIWLSSCLVAMCLG. Topologically, residues 27 to 401 are extracellular; it reads LPLGAAVPQE…YATFEKGQSS (375 aa). The region spanning 39–125 is the WSC domain; the sequence is AYYYVGCYTA…VGVHSYYSTI (87 aa). The Fibronectin type-III domain occupies 131–246; sequence GPHHLRISNK…ASIEATTEVG (116 aa). Asparagine 139, asparagine 217, and asparagine 329 each carry an N-linked (GlcNAc...) asparagine glycan. The helical transmembrane segment at 402-422 threads the bilayer; that stretch reads VVALAVTCVIFGSCLLLSLIA. Residues 423 to 791 are Cytoplasmic-facing; the sequence is YFYLRYKTCR…PQLEAVATMG (369 aa). Positions 493–758 constitute a Protein kinase domain; the sequence is LNVNDVIGDG…DVAFGVRQLM (266 aa). 499–507 provides a ligand contact to ATP; the sequence is IGDGRFGEI.

This sequence belongs to the protein kinase superfamily. Tyr protein kinase family.

The protein resides in the membrane. Functionally, probably lacks tyrosine-protein kinase activity. In Drosophila melanogaster (Fruit fly), this protein is Putative inactive tyrosine-protein kinase Wsck.